Here is a 107-residue protein sequence, read N- to C-terminus: MMKVLVVVALLVTLISYSSSEGIDDLEADELLSLMANEQTRKECIPKHHECTSNKHGCCRGNFFKYKCQCTTVVTQDGEQTERCFCGTPPHHKAAELVVGFGKKIFG.

The N-terminal stretch at 1-20 is a signal peptide; the sequence is MMKVLVVVALLVTLISYSSS. The propeptide occupies 21–41; sequence EGIDDLEADELLSLMANEQTR. 4 disulfide bridges follow: Cys44–Cys59, Cys51–Cys68, Cys58–Cys86, and Cys70–Cys84.

The protein belongs to the neurotoxin 19 (CSTX) family. 04 (U1-Lctx) subfamily. As to expression, expressed by the venom gland.

It is found in the secreted. This is U1-lycotoxin-Ls1b from Lycosa singoriensis (Wolf spider).